The following is a 348-amino-acid chain: Noscapine synthase SDR1 (348 aa).

This sequence belongs to the NAD(P)-dependent epimerase/dehydratase family.

The catalysed reaction is narcotine hemiacetal + NAD(+) = noscapine + NADH + H(+). Its pathway is alkaloid biosynthesis. Its function is as follows. Oxidoreductase that catalyzes the last step in the biosynthesis of the benzylisoquinoline alkaloid noscapine. Converts narcotine hemiacetal to noscapine. This chain is Noscapine synthase SDR1, found in Papaver somniferum (Opium poppy).